A 132-amino-acid polypeptide reads, in one-letter code: Aspartate 1-decarboxylase (132 aa).

Residue Ser-25 is the Schiff-base intermediate with substrate; via pyruvic acid of the active site. Ser-25 carries the pyruvic acid (Ser) modification. Thr-57 provides a ligand contact to substrate. Tyr-58 serves as the catalytic Proton donor. 73–75 is a substrate binding site; it reads GAA.

Belongs to the PanD family. In terms of assembly, heterooctamer of four alpha and four beta subunits. Pyruvate is required as a cofactor. Post-translationally, is synthesized initially as an inactive proenzyme, which is activated by self-cleavage at a specific serine bond to produce a beta-subunit with a hydroxyl group at its C-terminus and an alpha-subunit with a pyruvoyl group at its N-terminus.

It is found in the cytoplasm. It carries out the reaction L-aspartate + H(+) = beta-alanine + CO2. The protein operates within cofactor biosynthesis; (R)-pantothenate biosynthesis; beta-alanine from L-aspartate: step 1/1. Its function is as follows. Catalyzes the pyruvoyl-dependent decarboxylation of aspartate to produce beta-alanine. This Pelotomaculum thermopropionicum (strain DSM 13744 / JCM 10971 / SI) protein is Aspartate 1-decarboxylase.